Here is a 332-residue protein sequence, read N- to C-terminus: PTS-dependent dihydroxyacetone kinase, dihydroxyacetone-binding subunit DhaK (332 aa).

Residues 9–331 (QPQDVVSEML…LNEDVKTISW (323 aa)) enclose the DhaK domain. Dihydroxyacetone is bound by residues 55–58 (GSGH), K106, and D111. H58 (proton acceptor) is an active-site residue. H220 serves as the catalytic Tele-hemiaminal-histidine intermediate.

In terms of assembly, homodimer. The dihydroxyacetone kinase complex is composed of a homodimer of DhaM, a homodimer of DhaK and the subunit DhaL.

It carries out the reaction dihydroxyacetone + phosphoenolpyruvate = dihydroxyacetone phosphate + pyruvate. It functions in the pathway polyol metabolism; glycerol degradation. In terms of biological role, dihydroxyacetone binding subunit of the dihydroxyacetone kinase, which is responsible the phosphoenolpyruvate (PEP)-dependent phosphorylation of dihydroxyacetone via a phosphoryl group transfer from DhaL-ATP. The sequence is that of PTS-dependent dihydroxyacetone kinase, dihydroxyacetone-binding subunit DhaK from Lactococcus lactis subsp. lactis (strain IL1403) (Streptococcus lactis).